Here is a 98-residue protein sequence, read N- to C-terminus: NADH-ubiquinone oxidoreductase chain 4L (98 aa).

The next 3 membrane-spanning stretches (helical) occupy residues proline 2–phenylalanine 22, serine 29–leucine 49, and isoleucine 61–valine 81.

Belongs to the complex I subunit 4L family. In terms of assembly, core subunit of respiratory chain NADH dehydrogenase (Complex I) which is composed of 45 different subunits.

The protein resides in the mitochondrion inner membrane. It catalyses the reaction a ubiquinone + NADH + 5 H(+)(in) = a ubiquinol + NAD(+) + 4 H(+)(out). In terms of biological role, core subunit of the mitochondrial membrane respiratory chain NADH dehydrogenase (Complex I) which catalyzes electron transfer from NADH through the respiratory chain, using ubiquinone as an electron acceptor. Part of the enzyme membrane arm which is embedded in the lipid bilayer and involved in proton translocation. In Microcebus griseorufus (Gray-brown mouse lemur), this protein is NADH-ubiquinone oxidoreductase chain 4L (MT-ND4L).